The following is a 219-amino-acid chain: GTP-binding protein drn-1 (219 aa).

Residues 37 to 44, 56 to 62, 85 to 89, 146 to 149, and 177 to 178 contribute to the GTP site; these read GAGGVGKS, NENYVPT, DTTGS, NKKD, and AK. Positions 59–67 match the Effector region motif; it reads YVPTIEDTY. Residue cysteine 216 is modified to Cysteine methyl ester. The S-geranylgeranyl cysteine moiety is linked to residue cysteine 216. Positions 217–219 are cleaved as a propeptide — removed in mature form; it reads HIM.

Belongs to the small GTPase superfamily. Di-Ras family. In terms of assembly, interacts with epac-1 (via C-terminus). In terms of tissue distribution, expressed specifically in neurons including the nerve ring, ventral and dorsal nerve cord motor neurons and tail ganglia.

It is found in the cell membrane. Displays low GTPase activity and exists predominantly in the GTP-bound form. Together with epac-1, may regulate acetylcholine release at the neuromuscular junctions probably downstream of G-protein gsa-1 and adenylate cyclase acy-1. The sequence is that of GTP-binding protein drn-1 from Caenorhabditis elegans.